A 294-amino-acid polypeptide reads, in one-letter code: Ethanolamine ammonia-lyase small subunit (294 aa).

Residues Val207 and Glu228 each contribute to the adenosylcob(III)alamin site.

The protein belongs to the EutC family. The basic unit is a heterodimer which dimerizes to form tetramers. The heterotetramers trimerize; 6 large subunits form a core ring with 6 small subunits projecting outwards. Adenosylcob(III)alamin serves as cofactor.

The protein localises to the bacterial microcompartment. It carries out the reaction ethanolamine = acetaldehyde + NH4(+). It participates in amine and polyamine degradation; ethanolamine degradation. Its function is as follows. Catalyzes the deamination of various vicinal amino-alcohols to oxo compounds. Allows this organism to utilize ethanolamine as the sole source of nitrogen and carbon in the presence of external vitamin B12. In Clostridium tetani (strain Massachusetts / E88), this protein is Ethanolamine ammonia-lyase small subunit.